We begin with the raw amino-acid sequence, 2068 residues long: uncharacterized protein (2068 aa).

The next 2 helical transmembrane spans lie at 3–23 (FFIIIFILLLSFFFFDYNFCS) and 51–71 (TIYLIFPFLQHIFVHIFYYYI). Over residues 975–998 (QMHSGEDEKEELGEPKEKGSKSCQ) the composition is skewed to basic and acidic residues. The tract at residues 975–1030 (QMHSGEDEKEELGEPKEKGSKSCQEEEEQDEEEEDEDEEEEEDQGVNNYDNYVDGV) is disordered. Over residues 999 to 1018 (EEEEQDEEEEDEDEEEEEDQ) the composition is skewed to acidic residues. Residues 1890-1910 (FLYNLSFIYNVYNYLILIYIY) traverse the membrane as a helical segment.

It localises to the membrane. This is an uncharacterized protein from Plasmodium falciparum (isolate 3D7).